The primary structure comprises 116 residues: Flagellar transcriptional regulator FlhD (116 aa).

It belongs to the FlhD family. In terms of assembly, homodimer; disulfide-linked. Forms a heterohexamer composed of two FlhC and four FlhD subunits. Each FlhC binds a FlhD dimer, forming a heterotrimer, and a hexamer assembles by dimerization of two heterotrimers.

It is found in the cytoplasm. Functions in complex with FlhC as a master transcriptional regulator that regulates transcription of several flagellar and non-flagellar operons by binding to their promoter region. Activates expression of class 2 flagellar genes, including fliA, which is a flagellum-specific sigma factor that turns on the class 3 genes. Also regulates genes whose products function in a variety of physiological pathways. This is Flagellar transcriptional regulator FlhD from Serratia proteamaculans (strain 568).